Here is a 654-residue protein sequence, read N- to C-terminus: Fatty acid photodecarboxylase, chloroplastic (654 aa).

A chloroplast-targeting transit peptide spans 1–62 (MASITSRASA…RRGGALSARA (62 aa)). FAD-binding positions include 93–94 (TA), E114, L162, S166, 170–173 (NATL), and V298. C432, R451, Y466, and Q486 together coordinate hexadecanoate. FAD is bound at residue G622.

Belongs to the GMC oxidoreductase family. It depends on FAD as a cofactor.

Its subcellular location is the plastid. The protein localises to the chloroplast. It catalyses the reaction a long-chain fatty acid + hnu + H(+) = a long-chain alkane + CO2. It carries out the reaction hnu + hexadecanoate + H(+) = pentadecane + CO2. The catalysed reaction is hnu + octadecanoate + H(+) = heptadecane + CO2. The enzyme catalyses heptadecanoate + hnu + H(+) = hexadecane + CO2. It catalyses the reaction hnu + tetradecanoate + H(+) = tridecane + CO2. It carries out the reaction octanoate + hnu + H(+) = heptane + CO2. Its activity is regulated as follows. Activated by blue light and repressed by red light. Functionally, catalyzes the decarboxylation of free fatty acids to n-alkanes or n-alkenes in response to blue light. Substrate preference is toward fatty acids with C16 or C17 chains. Converts n-octanoic acid (C8 chain) more efficiently than palmitate (n-hexadecanoic acid, C16 chain) into n-heptane (C7 chain) and n-pentadecane (C15 chain), respectively, partly due to an autocatalytic effect of its n-heptane product. Saturated fatty acids are converted to alkanes, not alkenes. The decarboxylation is initiated through electron abstraction from the fatty acid by the photo-excited FAD. The protein is Fatty acid photodecarboxylase, chloroplastic of Chlorella variabilis (Green alga).